We begin with the raw amino-acid sequence, 190 residues long: RNA pyrophosphohydrolase (190 aa).

The region spanning 6–149 (GYRPNVGIIL…KRDVYTQALN (144 aa)) is the Nudix hydrolase domain. The Nudix box motif lies at 38–59 (GGIKYGESPVQAMYRELHEEVG). The interval 167 to 190 (QRVHGPRSTDNPSSETDGHAHIAG) is disordered.

The protein belongs to the Nudix hydrolase family. RppH subfamily. A divalent metal cation serves as cofactor.

Functionally, accelerates the degradation of transcripts by removing pyrophosphate from the 5'-end of triphosphorylated RNA, leading to a more labile monophosphorylated state that can stimulate subsequent ribonuclease cleavage. The polypeptide is RNA pyrophosphohydrolase (Bordetella parapertussis (strain 12822 / ATCC BAA-587 / NCTC 13253)).